We begin with the raw amino-acid sequence, 447 residues long: MSAATLKVSTESRPSSRLAVTVTVPGERCTASYEEAIKSLSRSINLPGFRKGKVPRSVLVQQLGGVRIKATALEKLIDSAWRDAIKQESLEPISQPDLSSGFDGLLESFNPGDELTFTLEADVAPTPKLKSTKGLKAEYEAVVYDASRVDSMIEDSRKQLATVVPVEGRAAEKGDIAVLGFKGTYSDDGSEIEGGSADSMDVDLDNGRMIPGFIEGVIGMKVGESKSVDCQFPDDYPKEDARGRKAAFAIELKDLKTRELPELDDAFAKQASEQDTMADLRKDLEQRLKDDAERRQTSNRNDGLVKALVEQLEVDLPEALIQQESRNLVEQTAAQFAQQGMDVKSLFTPDLIRNLMQNSRPEAEERLRRSFALTALAEAEDIKLDDSAIDTKLKEVKKDLSADAKVDPERLRQAVMDDLMQEQLMSWLETNSTLTEKAPEPESDTKS.

The PPIase FKBP-type domain occupies 174-261; the sequence is GDIAVLGFKG…LKDLKTRELP (88 aa).

The protein belongs to the FKBP-type PPIase family. Tig subfamily.

The protein resides in the cytoplasm. It catalyses the reaction [protein]-peptidylproline (omega=180) = [protein]-peptidylproline (omega=0). Its function is as follows. Involved in protein export. Acts as a chaperone by maintaining the newly synthesized protein in an open conformation. Functions as a peptidyl-prolyl cis-trans isomerase. The chain is Trigger factor from Synechococcus sp. (strain CC9902).